An 803-amino-acid polypeptide reads, in one-letter code: Rho guanine nucleotide exchange factor 7 (803 aa).

N-acetylmethionine is present on Met1. The 133-residue stretch at 1 to 133 (MNSAEQTVTW…SLVTLNKVTA (133 aa)) folds into the Calponin-homology (CH) domain. Asn2 is subject to N-acetylthreonine. Residues Ser153 and Ser176 each carry the phosphoserine modification. Positions 184–243 (NNQLVVRAKFNFQQTNEDELSFSKGDVIHVTRVEEGGWWEGTLNGRTGWFPSNYVREVKA) constitute an SH3 domain. Ser249 and Ser257 each carry phosphoserine. The region spanning 271 to 451 (YYNVVLQNIL…KNLSAQCQEV (181 aa)) is the DH domain. The region spanning 473–578 (DIKTLGNVTY…WVEHLQKQTK (106 aa)) is the PH domain. A phosphoserine mark is found at Ser518, Cys560, and Val579. The interval 580–655 (TSVGNPTIKP…TPKPWSLSCL (76 aa)) is disordered. Over residues 593–606 (PSHTLPSHPVTPSS) the composition is skewed to polar residues. Phosphoserine is present on residues Lys645 and Ser664. Positions 678 to 690 (KTMKKLLPKRKPE) are enriched in basic residues. 2 disordered regions span residues 678 to 704 (KTMKKLLPKRKPERKPSDEEFASRKST) and 748 to 773 (DDQPSLDSLGRRSSLSRLEPSDLSED). A compositionally biased stretch (basic and acidic residues) spans 691–700 (RKPSDEEFAS). The residue at position 694 (Ser694) is a Phosphoserine; by CaMK1. Low complexity predominate over residues 752 to 765 (SLDSLGRRSSLSRL).

In terms of assembly, interacts with PAK kinases through the SH3 domain. Interacts with GIT1 and TGFB1I1. Interacts with PTK2/FAK1 and RAC1. Interacts with ITCH and PARVB. Interacts with unphosphorylated PAK1. Interacts with SCRIB; interaction is direct and may play a role in regulation of apoptosis. Interacts with FRMPD4 (via N-terminus). Interacts with CaMK1. Interacts with BIN2. Interacts with YWHAZ. Interacts (via PH domain) with NOX1 (via FAD-binding FR-type domain). As to quaternary structure, interacts with SNX27. In terms of processing, phosphorylated by PTK2/FAK1; this promotes interaction with RAC1. Phosphorylated on Ser-694 by CaMK1; enhancement of GEF activity and downstream activation of RAC1.

It localises to the cell junction. Its subcellular location is the focal adhesion. It is found in the cell projection. The protein resides in the ruffle. The protein localises to the cytoplasm. It localises to the cell cortex. Its subcellular location is the lamellipodium. In terms of biological role, acts as a RAC1 guanine nucleotide exchange factor (GEF) and can induce membrane ruffling. Functions in cell migration, attachment and cell spreading. Promotes targeting of RAC1 to focal adhesions. May function as a positive regulator of apoptosis. Downstream of NMDA receptors and CaMKK-CaMK1 signaling cascade, promotes the formation of spines and synapses in hippocampal neurons. In Homo sapiens (Human), this protein is Rho guanine nucleotide exchange factor 7 (ARHGEF7).